The primary structure comprises 67 residues: Large ribosomal subunit protein bL31 (67 aa).

Cys16, Cys18, Cys36, and Cys39 together coordinate Zn(2+).

The protein belongs to the bacterial ribosomal protein bL31 family. Type A subfamily. Part of the 50S ribosomal subunit. Requires Zn(2+) as cofactor.

Binds the 23S rRNA. In Desulforudis audaxviator (strain MP104C), this protein is Large ribosomal subunit protein bL31.